A 410-amino-acid polypeptide reads, in one-letter code: D-amino acid dehydrogenase (410 aa).

9-14 (GGGIVG) serves as a coordination point for FAD.

It belongs to the DadA oxidoreductase family. Requires FAD as cofactor.

It is found in the cell inner membrane. The enzyme catalyses a D-alpha-amino acid + a quinone + H2O = a 2-oxocarboxylate + a quinol + NH4(+). Its function is as follows. Catalyzes the oxidative deamination of D-amino acids. Has broad substrate specificity; is mostly active on D-proline, and to a lesser extent, on several other D-amino acids such as D-alanine, D-phenylalanine and D-serine. Mediates electron transport from D-proline to coenzyme Q1 in vitro, and is involved in the electron transport chain from D-proline to the c-type cytochrome in vivo. The sequence is that of D-amino acid dehydrogenase from Helicobacter pylori (strain J99 / ATCC 700824) (Campylobacter pylori J99).